The primary structure comprises 321 residues: Phospho-N-acetylmuramoyl-pentapeptide-transferase (321 aa).

A run of 10 helical transmembrane segments spans residues 1–21 (MVYL…PVLI), 50–70 (MGGL…IIFI), 76–96 (IILL…DDYI), 112–132 (FLAQ…FNLT), 140–160 (IPFI…IVFW), 173–193 (GLDG…AIMA), 198–218 (ATSI…FLPF), 225–245 (VFMG…ISIM), 250–270 (LSLL…MIQV), and 300–320 (VVTV…WIGV).

The protein belongs to the glycosyltransferase 4 family. MraY subfamily. It depends on Mg(2+) as a cofactor.

Its subcellular location is the cell membrane. It catalyses the reaction UDP-N-acetyl-alpha-D-muramoyl-L-alanyl-gamma-D-glutamyl-L-lysyl-D-alanyl-D-alanine + di-trans,octa-cis-undecaprenyl phosphate = Mur2Ac(oyl-L-Ala-gamma-D-Glu-L-Lys-D-Ala-D-Ala)-di-trans,octa-cis-undecaprenyl diphosphate + UMP. It participates in cell wall biogenesis; peptidoglycan biosynthesis. Its function is as follows. Catalyzes the initial step of the lipid cycle reactions in the biosynthesis of the cell wall peptidoglycan: transfers peptidoglycan precursor phospho-MurNAc-pentapeptide from UDP-MurNAc-pentapeptide onto the lipid carrier undecaprenyl phosphate, yielding undecaprenyl-pyrophosphoryl-MurNAc-pentapeptide, known as lipid I. This chain is Phospho-N-acetylmuramoyl-pentapeptide-transferase, found in Staphylococcus saprophyticus subsp. saprophyticus (strain ATCC 15305 / DSM 20229 / NCIMB 8711 / NCTC 7292 / S-41).